We begin with the raw amino-acid sequence, 692 residues long: Formate hydrogenlyase transcriptional activator (692 aa).

The GAF domain occupies 202–344; it reads DIDELVSEVA…QIAERVAIAV (143 aa). One can recognise a Sigma-54 factor interaction domain in the interval 381–610; that stretch reads IIGRSEAMYN…LENVVERAVL (230 aa). Residues 409-416 and 472-481 each bind ATP; these read GETGTGKE and ADKSSLFLDE. A DNA-binding region (H-T-H motif) is located at residues 663–682; the sequence is PKGAAQRLGLKRTTLLSRMK.

Required for induction of expression of the formate dehydrogenase H and hydrogenase-3 structural genes. This Salmonella typhimurium (strain LT2 / SGSC1412 / ATCC 700720) protein is Formate hydrogenlyase transcriptional activator (fhlA).